Consider the following 115-residue polypeptide: T cell receptor beta variable 16 (115 aa).

The signal sequence occupies residues 1–20 (MSPIFTCITILCLLAAGSPG). Positions 21 to 115 (EEVAQTPKHL…SAVYFCASSQ (95 aa)) constitute an Ig-like domain. Cysteines 42 and 111 form a disulfide.

As to quaternary structure, alpha-beta TR is a heterodimer composed of an alpha and beta chain; disulfide-linked. The alpha-beta TR is associated with the transmembrane signaling CD3 coreceptor proteins to form the TR-CD3 (TcR or TCR). The assembly of alpha-beta TR heterodimers with CD3 occurs in the endoplasmic reticulum where a single alpha-beta TR heterodimer associates with one CD3D-CD3E heterodimer, one CD3G-CD3E heterodimer and one CD247 homodimer forming a stable octameric structure. CD3D-CD3E and CD3G-CD3E heterodimers preferentially associate with TR alpha and TR beta chains, respectively. The association of the CD247 homodimer is the last step of TcR assembly in the endoplasmic reticulum and is required for transport to the cell surface.

It localises to the cell membrane. V region of the variable domain of T cell receptor (TR) beta chain that participates in the antigen recognition. Alpha-beta T cell receptors are antigen specific receptors which are essential to the immune response and are present on the cell surface of T lymphocytes. Recognize peptide-major histocompatibility (MH) (pMH) complexes that are displayed by antigen presenting cells (APC), a prerequisite for efficient T cell adaptive immunity against pathogens. Binding of alpha-beta TR to pMH complex initiates TR-CD3 clustering on the cell surface and intracellular activation of LCK that phosphorylates the ITAM motifs of CD3G, CD3D, CD3E and CD247 enabling the recruitment of ZAP70. In turn ZAP70 phosphorylates LAT, which recruits numerous signaling molecules to form the LAT signalosome. The LAT signalosome propagates signal branching to three major signaling pathways, the calcium, the mitogen-activated protein kinase (MAPK) kinase and the nuclear factor NF-kappa-B (NF-kB) pathways, leading to the mobilization of transcription factors that are critical for gene expression and essential for T cell growth and differentiation. The T cell repertoire is generated in the thymus, by V-(D)-J rearrangement. This repertoire is then shaped by intrathymic selection events to generate a peripheral T cell pool of self-MH restricted, non-autoaggressive T cells. Post-thymic interaction of alpha-beta TR with the pMH complexes shapes TR structural and functional avidity. This Homo sapiens (Human) protein is T cell receptor beta variable 16.